The sequence spans 188 residues: Elongation factor P (188 aa).

This sequence belongs to the elongation factor P family.

Its subcellular location is the cytoplasm. It participates in protein biosynthesis; polypeptide chain elongation. Involved in peptide bond synthesis. Stimulates efficient translation and peptide-bond synthesis on native or reconstituted 70S ribosomes in vitro. Probably functions indirectly by altering the affinity of the ribosome for aminoacyl-tRNA, thus increasing their reactivity as acceptors for peptidyl transferase. The polypeptide is Elongation factor P (Chlorobium phaeobacteroides (strain DSM 266 / SMG 266 / 2430)).